The chain runs to 465 residues: ATP-dependent rRNA helicase rrp3 (465 aa).

A compositionally biased stretch (basic and acidic residues) spans 1-22 (MAPSEKKLTEDKKNSSLNKKIE). The segment at 1–44 (MAPSEKKLTEDKKNSSLNKKIETSNSSSEKSSENNNGDSQNNEA) is disordered. Low complexity predominate over residues 23-36 (TSNSSSEKSSENNN). A Q motif motif is present at residues 46 to 74 (KTFKELGVIDELCEACEKLGFKTPTPIQQ). One can recognise a Helicase ATP-binding domain in the interval 77-248 (IPVVLNKRDV…RASLHQPVRV (172 aa)). 90–97 (AQTGSGKT) is a binding site for ATP. Residues 196–199 (DEAD) carry the DEAD box motif. Residues 275–419 (YLVYLVNELA…EYEIDKEGVF (145 aa)) enclose the Helicase C-terminal domain. Residues 442-453 (RRKSKGKLHTKR) show a composition bias toward basic residues. The disordered stretch occupies residues 442-465 (RRKSKGKLHTKRKRDDLDREEQIY). Positions 454-465 (KRDDLDREEQIY) are enriched in basic and acidic residues.

This sequence belongs to the DEAD box helicase family. DDX47/RRP3 subfamily. As to quaternary structure, interacts with the SSU processome.

The protein localises to the nucleus. The enzyme catalyses ATP + H2O = ADP + phosphate + H(+). Its function is as follows. ATP-dependent rRNA helicase required for pre-ribosomal RNA processing. Involved in the maturation of the 35S-pre-rRNA and to its cleavage to mature 18S rRNA. This is ATP-dependent rRNA helicase rrp3 from Schizosaccharomyces pombe (strain 972 / ATCC 24843) (Fission yeast).